A 171-amino-acid chain; its full sequence is MEEEMSNRRVSNRTRKVATKMAAALTSNDNRTQAAIARLEALENDNGAIEVIDLNDDEEASLDEDDDLGYLQKKQHKGSKRKTRQAKALEARKAPKSFLELLQEANLESLPSHVPTYLKAAVGPPSSSSRRYFCSVCGYIAGYNCCLCGMRFCSIRCQNIHKDTRCQKFVA.

The segment at 63–87 (DEDDDLGYLQKKQHKGSKRKTRQAK) is disordered. Basic residues predominate over residues 73 to 85 (KKQHKGSKRKTRQ). Zn(2+) contacts are provided by C134, C137, C145, C148, C153, C157, H161, and C166. An HIT-type zinc finger spans residues 134–166 (CSVCGYIAGYNCCLCGMRFCSIRCQNIHKDTRC).

This sequence belongs to the ZNHIT1 family. As to quaternary structure, homodimer. Component of the SWR1 chromatin-remodeling complex composed of at least ARP6/ESD1/SUF3, PIE1, SWC6, SWC2 and H2AZs (HTA8, HTA9, HTA11). Interacts directly with ARP6, PIE1 and SWC2. Interacts with FLX and SUF4, two component of the transcription activator complex FRI-C, and with ASHH2 and TAF14. In terms of tissue distribution, expressed in root, lateral root primordia, shoot apex, leaves, stems, inflorescences, flowers, axillary buds, developing siliques and premature seeds.

The protein localises to the nucleus speckle. It is found in the nucleus. Its function is as follows. Component of the SWR1 complex which mediates the ATP-dependent exchange of histone H2A for the H2A variant H2A.F/Z leading to transcriptional regulation of selected genes (e.g. FLC) by chromatin remodeling. Coodinates SWR1-C, FRI-C (FLC transcription activator complex), histone methyltransferase and general transcription factors. Represses flowering by positively regulating FLC and MAF4. Binds to the promoter region of FLC chromatin. The polypeptide is SWR1 complex subunit 6 (SWC6) (Arabidopsis thaliana (Mouse-ear cress)).